Reading from the N-terminus, the 83-residue chain is MPVIESAIQRVRLTKKQHDRNEPQASAYRTAVKRFEKAAAAGEDNLAELYKIASSAIDRAHSKGLIKKNKASREKSRLAKYVK.

Belongs to the bacterial ribosomal protein bS20 family.

Its function is as follows. Binds directly to 16S ribosomal RNA. The chain is Small ribosomal subunit protein bS20 from Leuconostoc citreum (strain KM20).